The primary structure comprises 634 residues: uncharacterized protein (634 aa).

An N-terminal signal peptide occupies residues 1–40; sequence MWLQQRLKGLPGLLSSSWARRLLCLLGLLLLLLWFGGSGA. At 41 to 589 the chain is on the extracellular side; the sequence is RRAAGGLHLL…DEHMAQQDPG (549 aa). Asn-363 is a glycosylation site (N-linked (GlcNAc...) asparagine). The chain crosses the membrane as a helical span at residues 590–610; sequence LPFLFWFSVASLITLFHLFLF. Over 611–634 the chain is Cytoplasmic; sequence KLIYNEYCGPGAKPLFRSKEDPSV.

The protein localises to the membrane. This is an uncharacterized protein from Homo sapiens (Human).